The sequence spans 513 residues: NAD(P)H-quinone oxidoreductase subunit 2 (513 aa).

14 helical membrane-spanning segments follow: residues 12-32 (TLWP…VDLI), 41-61 (LPYL…PMWI), 77-97 (LSVV…LMSV), 104-124 (SLAT…AMLL), 130-150 (MAMI…LSGY), 165-185 (LLIG…LYGF), 199-219 (IVNL…GICF), 238-258 (PTPV…ALAI), 272-292 (WQTL…VVAI), 300-320 (MLAY…AIGT), 328-348 (ILYI…VVLF), 372-392 (LVLS…GFFG), 394-414 (LYLF…FGLV), and 456-476 (AGML…PPLI). Polar residues predominate over residues 494–505 (TATPVSRVSTGA). The interval 494–513 (TATPVSRVSTGAQAPADHGR) is disordered.

It belongs to the complex I subunit 2 family. In terms of assembly, NDH-1 can be composed of about 15 different subunits; different subcomplexes with different compositions have been identified which probably have different functions.

The protein localises to the cell inner membrane. It carries out the reaction a plastoquinone + NADH + (n+1) H(+)(in) = a plastoquinol + NAD(+) + n H(+)(out). It catalyses the reaction a plastoquinone + NADPH + (n+1) H(+)(in) = a plastoquinol + NADP(+) + n H(+)(out). Functionally, NDH-1 shuttles electrons from an unknown electron donor, via FMN and iron-sulfur (Fe-S) centers, to quinones in the respiratory and/or the photosynthetic chain. The immediate electron acceptor for the enzyme in this species is believed to be plastoquinone. Couples the redox reaction to proton translocation, and thus conserves the redox energy in a proton gradient. Cyanobacterial NDH-1 also plays a role in inorganic carbon-concentration. The protein is NAD(P)H-quinone oxidoreductase subunit 2 of Gloeobacter violaceus (strain ATCC 29082 / PCC 7421).